The chain runs to 88 residues: Cell division topological specificity factor (88 aa).

Belongs to the MinE family.

Functionally, prevents the cell division inhibition by proteins MinC and MinD at internal division sites while permitting inhibition at polar sites. This ensures cell division at the proper site by restricting the formation of a division septum at the midpoint of the long axis of the cell. This is Cell division topological specificity factor from Shewanella denitrificans (strain OS217 / ATCC BAA-1090 / DSM 15013).